The chain runs to 202 residues: LexA repressor (202 aa).

The segment at residues 28–48 (RAEIAQRLGFRSPNAAEEHLK) is a DNA-binding region (H-T-H motif). Active-site for autocatalytic cleavage activity residues include S119 and K156.

Belongs to the peptidase S24 family. In terms of assembly, homodimer.

The catalysed reaction is Hydrolysis of Ala-|-Gly bond in repressor LexA.. Its function is as follows. Represses a number of genes involved in the response to DNA damage (SOS response), including recA and lexA. Binds to the 16 bp palindromic sequence 5'-CTGTATATATATACAG-3'. In the presence of single-stranded DNA, RecA interacts with LexA causing an autocatalytic cleavage which disrupts the DNA-binding part of LexA, leading to derepression of the SOS regulon and eventually DNA repair. This chain is LexA repressor, found in Enterobacter sp. (strain 638).